The following is a 94-amino-acid chain: Cell division protein FtsB (94 aa).

At 1–3 (MRW) the chain is on the cytoplasmic side. Residues 4–21 (LTVGLLAAIGLLQYPLWV) form a helical membrane-spanning segment. The Periplasmic portion of the chain corresponds to 22-94 (GKGGWLKVWE…VQIPEKVPGK (73 aa)). Residues 31-73 (EYDRQLQQQKEVTRKLEIRNAGLDAEVRDLKQGYDAIEERARF) are a coiled coil.

Belongs to the FtsB family. Part of a complex composed of FtsB, FtsL and FtsQ.

It is found in the cell inner membrane. Its function is as follows. Essential cell division protein. May link together the upstream cell division proteins, which are predominantly cytoplasmic, with the downstream cell division proteins, which are predominantly periplasmic. The sequence is that of Cell division protein FtsB from Dechloromonas aromatica (strain RCB).